The following is a 112-amino-acid chain: UPF0060 membrane protein XOO1694 (112 aa).

4 helical membrane-spanning segments follow: residues 8–28 (LLLFAATALAELVGCYLPYLW), 32–52 (GGSVWLLLPTALRLASFVWLL), 62–82 (VYAAYGGVYIASALGLWLWWV), and 92–112 (LLGAVCCLFGMAIIMFAPRSA).

This sequence belongs to the UPF0060 family.

It localises to the cell inner membrane. The polypeptide is UPF0060 membrane protein XOO1694 (Xanthomonas oryzae pv. oryzae (strain MAFF 311018)).